Reading from the N-terminus, the 131-residue chain is Cystatin J (131 aa).

The N-terminal stretch at 1–18 is a signal peptide; that stretch reads MHLYLCVLVCLSIGMANC. One can recognise a Cystatin domain in the interval 35-109; it reads DEILLTGVEF…RMNLPTKCSF (75 aa). The short motif at 68-72 is the Secondary area of contact element; sequence QVVAG. 2 cysteine pairs are disulfide-bonded: Cys-86/Cys-97 and Cys-107/Cys-128.

It belongs to the cystatin family.

It is found in the secreted. Its subcellular location is the nematocyst. Functionally, this recombinant protein inhibits the C1 cysteine protease papain (Ki is below 0.5 nM). The protein is Cystatin J of Cyanea capillata (Lion's mane jellyfish).